The primary structure comprises 124 residues: Large ribosomal subunit protein uL22 (124 aa).

This sequence belongs to the universal ribosomal protein uL22 family. As to quaternary structure, part of the 50S ribosomal subunit.

Its function is as follows. This protein binds specifically to 23S rRNA; its binding is stimulated by other ribosomal proteins, e.g. L4, L17, and L20. It is important during the early stages of 50S assembly. It makes multiple contacts with different domains of the 23S rRNA in the assembled 50S subunit and ribosome. In terms of biological role, the globular domain of the protein is located near the polypeptide exit tunnel on the outside of the subunit, while an extended beta-hairpin is found that lines the wall of the exit tunnel in the center of the 70S ribosome. The sequence is that of Large ribosomal subunit protein uL22 from Macrococcus caseolyticus (strain JCSC5402) (Macrococcoides caseolyticum).